Reading from the N-terminus, the 80-residue chain is DNA-directed RNA polymerase RPB10 homolog (80 aa).

Zn(2+) is bound by residues C7, C10, C65, and C66.

The protein belongs to the archaeal RpoN/eukaryotic RPB10 RNA polymerase subunit family. In terms of assembly, part of the viral DNA-directed RNA polymerase that consists of 8 polII-like subunits (RPB1, RPB2, RPB3, RPB5, RPB6, RPB7, RPB9, RPB10), a capping enzyme and a termination factor.

It localises to the host cytoplasm. Component of the DNA-directed RNA polymerase (RNAP) that catalyzes the transcription in the cytoplasm of viral DNA into RNA using the four ribonucleoside triphosphates as substrates. This is DNA-directed RNA polymerase RPB10 homolog from African swine fever virus (strain Badajoz 1971 Vero-adapted) (Ba71V).